A 1697-amino-acid chain; its full sequence is Histone acetyltransferase HAC1 (1697 aa).

Residues 1–16 (MNVQAHMSGQVSNQGT) show a composition bias toward polar residues. Disordered regions lie at residues 1–45 (MNVQ…LGPS), 202–221 (SNFG…QRNT), 385–439 (SFQA…QQQR), 555–574 (HWQS…SNER), 583–631 (RMSG…GNRD), and 843–901 (IGIA…GKPE). Composition is skewed to low complexity over residues 17 to 28 (MSQQNGNSQMQN) and 202 to 217 (SNFG…SMSS). Residues 385–398 (SFQAVSRTSSSLSH) show a composition bias toward polar residues. Residues 399 to 439 (QQQQFQQQPNRFQQQPNQFHQQQQQFLHQQQLKQQSQQQQR) are compositionally biased toward low complexity. Polar residues-rich tracts occupy residues 556 to 571 (WQSQ…NSMS) and 584 to 628 (MSGT…NGNG). A TAZ-type 1 zinc finger spans residues 629–709 (NRDPRFKNQQ…EPNCPVCIPV (81 aa)). A compositionally biased stretch (basic and acidic residues) spans 873–901 (TKVEKEPESLKKENLAESTEHTSKSGKPE). Residues 989–1066 (HYFCIPCYNE…EYTCPYCFIA (78 aa)) form a PHD-type zinc finger. In terms of domain architecture, CBP/p300-type HAT spans 1081 to 1517 (VLGAKDLPRT…VLYHLHNPTA (437 aa)). Residues 1204-1206 (LDS), 1223-1224 (RT), and W1279 contribute to the acetyl-CoA site. 2 ZZ-type zinc fingers span residues 1399-1462 (HLQP…IMDI) and 1519-1572 (AFVT…SLAD). Zn(2+)-binding residues include C1404, C1407, C1419, C1422, C1428, C1431, H1444, H1452, C1524, C1527, C1539, C1542, C1548, C1551, H1560, and H1562. A TAZ-type 2 zinc finger spans residues 1579-1662 (EARQLRVLQL…ECHVPRCRDL (84 aa)).

Rosette leaves, stems and flowers.

The protein localises to the nucleus. The catalysed reaction is L-lysyl-[protein] + acetyl-CoA = N(6)-acetyl-L-lysyl-[protein] + CoA + H(+). Its function is as follows. Acetyltransferase enzyme. Acetylates histones, giving a specific tag for transcriptional activation. This chain is Histone acetyltransferase HAC1 (HAC1), found in Arabidopsis thaliana (Mouse-ear cress).